Here is a 354-residue protein sequence, read N- to C-terminus: Soluble interferon alpha/beta receptor OPG204 (354 aa).

An N-terminal signal peptide occupies residues 1-22; that stretch reads MMKMTMKMMVHIYFVSLLLLLF. Ig-like C2-type domains lie at 68–150 and 158–240; these read IGEP…RSHV and PEIY…IVVS. 2 disulfide bridges follow: cysteine 76–cysteine 132 and cysteine 175–cysteine 224. 5 N-linked (GlcNAc...) asparagine; by host glycosylation sites follow: asparagine 120, asparagine 124, asparagine 185, asparagine 272, and asparagine 324. Residues 249 to 348 form the Ig-like V-type domain; it reads PSQDHRFKLI…HNYYFEKTLT (100 aa). The cysteines at positions 275 and 336 are disulfide-linked.

Belongs to the interleukin-1 receptor family. Interacts with host IFNA1.

It localises to the secreted. Functionally, counteracts the antiviral effects of host IFN-alpha/beta and key IFN-inducible proteins involved in viral RNA degradation suxh as host OAS1. Acts as a soluble IFN-alpha receptor and thus inhibits the interaction between host IFN-alpha and its receptor. This is Soluble interferon alpha/beta receptor OPG204 (OPG204) from Homo sapiens (Human).